A 265-amino-acid polypeptide reads, in one-letter code: Small ribosomal subunit protein uS2 (265 aa).

The protein belongs to the universal ribosomal protein uS2 family.

This is Small ribosomal subunit protein uS2 from Aliarcobacter butzleri (strain RM4018) (Arcobacter butzleri).